The chain runs to 254 residues: NH(3)-dependent NAD(+) synthetase (254 aa).

32-39 (GISGGVDS) contacts ATP. Aspartate 38 contacts Mg(2+). Position 113 (arginine 113) interacts with deamido-NAD(+). Threonine 133 contacts ATP. Glutamate 138 is a Mg(2+) binding site. Residues lysine 146 and aspartate 153 each coordinate deamido-NAD(+). Positions 162 and 184 each coordinate ATP. 244–245 (HK) is a binding site for deamido-NAD(+).

The protein belongs to the NAD synthetase family. As to quaternary structure, homodimer.

The catalysed reaction is deamido-NAD(+) + NH4(+) + ATP = AMP + diphosphate + NAD(+) + H(+). The protein operates within cofactor biosynthesis; NAD(+) biosynthesis; NAD(+) from deamido-NAD(+) (ammonia route): step 1/1. Its function is as follows. Catalyzes the ATP-dependent amidation of deamido-NAD to form NAD. Uses ammonia as a nitrogen source. This chain is NH(3)-dependent NAD(+) synthetase, found in Thermococcus sibiricus (strain DSM 12597 / MM 739).